A 553-amino-acid chain; its full sequence is Protein PNS1 (553 aa).

The tract at residues 1–53 (MFGEGNKPTEPVPAYDAGQDPFQGPNASKNQYQGSAADYNGAPPPPASQPGNQ) is disordered. Over 1 to 94 (MFGEGNKPTE…EDSKPKWNDW (94 aa)) the chain is Cytoplasmic. Positions 25 to 34 (PNASKNQYQG) are enriched in polar residues. Residues 95-115 (PFTIFFAGCVIAFIVVAAITL) traverse the membrane as a helical segment. The Extracellular segment spans residues 116–142 (RAWSQNSSSQGSGVYDGANTGTLTTNS). Residue Asn121 is glycosylated (N-linked (GlcNAc...) asparagine). The chain crosses the membrane as a helical span at residues 143–163 (AIMLAISCIIAFVFSIIGIVL). The Cytoplasmic portion of the chain corresponds to 164 to 169 (ARMFPK). The chain crosses the membrane as a helical span at residues 170 to 190 (FFIIAGILFNIIAGLATAIMY). Over 191 to 192 (LS) the chain is Extracellular. The chain crosses the membrane as a helical span at residues 193 to 213 (LKYYSAGIVFLVFTAICALFY). Residues 214-241 (WRMRHRIPFTVAVLKTVMDVMKSYPQTW) lie on the Cytoplasmic side of the membrane. The helical transmembrane segment at 242–262 (FVTLIGSIIATAFSILFSAVI) threads the bilayer. Residues 263-287 (VATYMKYDDKANNPGCSTNGGSCSN) lie on the Extracellular side of the membrane. The chain crosses the membrane as a helical span at residues 288 to 308 (AKLIGLLVLVFFCGYYIAEVI). The Cytoplasmic segment spans residues 309–349 (RNVIHCTVSGIFGAWYYFSKSDQGMPKWPGFGALKRSLTYS). The chain crosses the membrane as a helical span at residues 350–370 (FGSICFGSLIVTIIETLKAVL). Residues 371 to 385 (RLAVDGVMGGGGADN) are Extracellular-facing. A helical transmembrane segment spans residues 386–406 (GWMQCLALIANWIFSFLEWLA). The Cytoplasmic segment spans residues 407-450 (RYFNHYAYVFIALYGKPYLRAAKETWYMLREKGIDALINDNLVN). A helical membrane pass occupies residues 451-471 (VALSFFTLFTCYITTLFAYLY). Topologically, residues 472 to 484 (LRYTDPNYNDNNN) are extracellular. Residues 485–505 (FTPALMAFAFVIAMEICNVIT) traverse the membrane as a helical segment. At 506–553 (ETIRSGTATFFVALGNDPEVFHLSYPERFDEIFRAYPEVLKKLSHQNV) the chain is on the cytoplasmic side.

The protein belongs to the CTL (choline transporter-like) family.

It is found in the cell membrane. Probably involved in transport through the plasma membrane. The chain is Protein PNS1 (PNS1) from Kluyveromyces lactis (strain ATCC 8585 / CBS 2359 / DSM 70799 / NBRC 1267 / NRRL Y-1140 / WM37) (Yeast).